A 336-amino-acid polypeptide reads, in one-letter code: Glycerol-3-phosphate dehydrogenase [NAD(P)+] (336 aa).

Residues serine 16, tyrosine 17, histidine 37, and lysine 111 each contribute to the NADPH site. Positions 111, 140, and 142 each coordinate sn-glycerol 3-phosphate. Alanine 144 serves as a coordination point for NADPH. Sn-glycerol 3-phosphate-binding residues include lysine 196, aspartate 249, serine 259, arginine 260, and asparagine 261. Lysine 196 acts as the Proton acceptor in catalysis. Arginine 260 is a binding site for NADPH. 2 residues coordinate NADPH: valine 284 and glutamate 286.

Belongs to the NAD-dependent glycerol-3-phosphate dehydrogenase family.

The protein resides in the cytoplasm. The catalysed reaction is sn-glycerol 3-phosphate + NAD(+) = dihydroxyacetone phosphate + NADH + H(+). It catalyses the reaction sn-glycerol 3-phosphate + NADP(+) = dihydroxyacetone phosphate + NADPH + H(+). It participates in membrane lipid metabolism; glycerophospholipid metabolism. Its function is as follows. Catalyzes the reduction of the glycolytic intermediate dihydroxyacetone phosphate (DHAP) to sn-glycerol 3-phosphate (G3P), the key precursor for phospholipid synthesis. This chain is Glycerol-3-phosphate dehydrogenase [NAD(P)+], found in Actinobacillus pleuropneumoniae serotype 3 (strain JL03).